The chain runs to 236 residues: CD81 antigen (236 aa).

At 1–12 (MGVEGCTKCIKY) the chain is on the cytoplasmic side. Residues 13-33 (LLFVFNFVFWLAGGVILGVAL) traverse the membrane as a helical segment. The Extracellular portion of the chain corresponds to 34–63 (WLRHDPQTTNLLYLELGDKPAPNTFYVGIY). A helical membrane pass occupies residues 64–84 (ILIAVGAVMMFVGFLGCYGAI). The Cytoplasmic portion of the chain corresponds to 85–89 (QESQC). The helical transmembrane segment at 90–112 (LLGTFFTCLVILFACEVAAGIWG) threads the bilayer. Residues 113 to 201 (FVNKDQIAKD…QKIDDLFSGK (89 aa)) lie on the Extracellular side of the membrane. Intrachain disulfides connect Cys-156–Cys-190 and Cys-157–Cys-175. Residues 202-224 (LYLIGIAAIVVAVIMIFEMILSM) traverse the membrane as a helical segment. Glu-219 provides a ligand contact to cholesterol. Residues 225–236 (VLCCGIRNSSVY) lie on the Cytoplasmic side of the membrane.

Belongs to the tetraspanin (TM4SF) family. As to quaternary structure, homodimer. Part of a complex composed of CD19, CR2/CD21, CD81 and IFITM1/CD225 in the membrane of mature B cells. Interacts (via the second extracellular domain) with CD19; this interaction is initiated early during biosynthesis in the ER and enables trafficking of only properly folded CD19. Part of a complex that includes MHC class II/HLA-DR molecules and IFITM1. Interacts with IFITM1. Interacts with IFITM2 and IFITM3. Part of integrin-tetraspanin complex composed of CD9, CD81, beta-1 and beta-2 integrins in the membrane of monocyte/macrophages. Interacts (via the second extracellular domain) with integrin ITGAV:ITGB3. Interacts with CD247/CD3 zeta, ICAM1 and CD9 at the immune synapse on T cell membrane. Part of a GPCR-tetraspanin complex consisting at least of ADGRG1, CD81, possibly CD9, and GNA11 in which CD81 enhances the association of ADGRG1 with GNA11. Part of a complex composed of CD9, CD81, PTGFRN and IGSF8. Interacts directly with IGSF8. Interacts with CD53 and SCIMP. Interacts with SAMHD1 (via its C-terminus). Interacts with glypican GPC3 and with the transcriptional repressor HHEX; binding to GPC3 decreases the availability of free CD81 for binding to HHEX, resulting in nuclear translocation of HHEX and transcriptional repression. Interacts with CLDN1. Interacts with CLDN6 and CLDN9. Post-translationally, not glycosylated. Likely constitutively palmitoylated at low levels. Protein palmitoylation is up-regulated upon coligation of BCR and CD9-C2R-CD81 complexes in lipid rafts.

Its subcellular location is the cell membrane. The protein localises to the basolateral cell membrane. Functionally, structural component of specialized membrane microdomains known as tetraspanin-enriched microdomains (TERMs), which act as platforms for receptor clustering and signaling. Essential for trafficking and compartmentalization of CD19 receptor on the surface of activated B cells. Upon initial encounter with microbial pathogens, enables the assembly of CD19-CR2/CD21 and B cell receptor (BCR) complexes at signaling TERMs, lowering the threshold dose of antigen required to trigger B cell clonal expansion and antibody production. In T cells, facilitates the localization of CD247/CD3 zeta at antigen-induced synapses with B cells, providing for costimulation and polarization toward T helper type 2 phenotype. Present in MHC class II compartments, may also play a role in antigen presentation. Can act both as positive and negative regulator of homotypic or heterotypic cell-cell fusion processes. Positively regulates sperm-egg fusion and may be involved in acrosome reaction. In myoblasts, associates with CD9 and PTGFRN and inhibits myotube fusion during muscle regeneration. In macrophages, associates with CD9 and beta-1 and beta-2 integrins, and prevents macrophage fusion into multinucleated giant cells specialized in ingesting complement-opsonized large particles. Also prevents the fusion of mononuclear cell progenitors into osteoclasts in charge of bone resorption. May regulate the compartmentalization of enzymatic activities. In T cells, defines the subcellular localization of dNTPase SAMHD1 and permits its degradation by the proteasome, thereby controlling intracellular dNTP levels. Also involved in cell adhesion and motility. Positively regulates integrin-mediated adhesion of macrophages, particularly relevant for the inflammatory response in the lung. The protein is CD81 antigen (CD81) of Pan troglodytes (Chimpanzee).